A 664-amino-acid chain; its full sequence is Transketolase 1 (664 aa).

His-26 lines the substrate pocket. Residues His-66 and Gly-114–Leu-116 each bind thiamine diphosphate. Asp-155 serves as a coordination point for Mg(2+). 2 residues coordinate thiamine diphosphate: Gly-156 and Asn-185. Mg(2+) is bound by residues Asn-185 and Ile-187. His-260, Arg-357, and Ser-384 together coordinate substrate. His-260 contacts thiamine diphosphate. Catalysis depends on Glu-411, which acts as the Proton donor. Position 437 (Phe-437) interacts with thiamine diphosphate. 3 residues coordinate substrate: His-461, Asp-469, and Arg-520.

It belongs to the transketolase family. Homodimer. Requires Mg(2+) as cofactor. Ca(2+) serves as cofactor. Mn(2+) is required as a cofactor. It depends on Co(2+) as a cofactor. The cofactor is thiamine diphosphate.

It catalyses the reaction D-sedoheptulose 7-phosphate + D-glyceraldehyde 3-phosphate = aldehydo-D-ribose 5-phosphate + D-xylulose 5-phosphate. Catalyzes the transfer of a two-carbon ketol group from a ketose donor to an aldose acceptor, via a covalent intermediate with the cofactor thiamine pyrophosphate. The protein is Transketolase 1 (tkt1) of Vibrio vulnificus (strain CMCP6).